The primary structure comprises 255 residues: Uracil-DNA glycosylase (255 aa).

The interval 1–20 (MFSASTTPEQPLGLSGDATP) is disordered. Asp99 serves as the catalytic Proton acceptor.

The protein belongs to the uracil-DNA glycosylase (UDG) superfamily. UNG family.

It is found in the host nucleus. The catalysed reaction is Hydrolyzes single-stranded DNA or mismatched double-stranded DNA and polynucleotides, releasing free uracil.. Its function is as follows. Excises uracil residues from the DNA which can arise as a result of misincorporation of dUMP residues by DNA polymerase or deamination of cytosines. Therefore may reduce deleterious uracil incorporation into the viral genome, particularly in terminally differentiated cells which lack DNA repair enzymes. The sequence is that of Uracil-DNA glycosylase from Human herpesvirus 2 (strain HG52) (HHV-2).